The primary structure comprises 243 residues: Uroporphyrinogen-III C-methyltransferase (243 aa).

S-adenosyl-L-homocysteine-binding positions include Pro12, 88–90 (SGD), 118–119 (ST), Met166, and Ala195.

This sequence belongs to the precorrin methyltransferase family.

It catalyses the reaction uroporphyrinogen III + 2 S-adenosyl-L-methionine = precorrin-2 + 2 S-adenosyl-L-homocysteine + H(+). It functions in the pathway cofactor biosynthesis; adenosylcobalamin biosynthesis; precorrin-2 from uroporphyrinogen III: step 1/1. It participates in porphyrin-containing compound metabolism; siroheme biosynthesis; precorrin-2 from uroporphyrinogen III: step 1/1. Catalyzes the two successive C-2 and C-7 methylation reactions involved in the conversion of uroporphyrinogen III to precorrin-2 via the intermediate formation of precorrin-1. It is a step in the biosynthesis of both cobalamin (vitamin B12) and siroheme. The chain is Uroporphyrinogen-III C-methyltransferase from Synechococcus elongatus (strain ATCC 33912 / PCC 7942 / FACHB-805) (Anacystis nidulans R2).